The sequence spans 134 residues: Large-conductance mechanosensitive channel (134 aa).

The next 2 helical transmembrane spans lie at 15 to 35 and 80 to 100; these read IDLA…QSVV and GNFI…FLAV.

It belongs to the MscL family. In terms of assembly, homopentamer.

It localises to the cell inner membrane. Functionally, channel that opens in response to stretch forces in the membrane lipid bilayer. May participate in the regulation of osmotic pressure changes within the cell. The protein is Large-conductance mechanosensitive channel of Methylocella silvestris (strain DSM 15510 / CIP 108128 / LMG 27833 / NCIMB 13906 / BL2).